We begin with the raw amino-acid sequence, 466 residues long: Glutamate decarboxylase alpha (466 aa).

Positions 62 and 83 each coordinate substrate. Pyridoxal 5'-phosphate contacts are provided by residues 126–127 (SS), Thr-212, and His-275. The residue at position 276 (Lys-276) is an N6-(pyridoxal phosphate)lysine.

It belongs to the group II decarboxylase family. In terms of assembly, homohexamer. Pyridoxal 5'-phosphate is required as a cofactor.

The catalysed reaction is L-glutamate + H(+) = 4-aminobutanoate + CO2. Converts glutamate to gamma-aminobutyrate (GABA), consuming one intracellular proton in the reaction. The gad system helps to maintain a near-neutral intracellular pH when cells are exposed to extremely acidic conditions. The ability to survive transit through the acidic conditions of the stomach is essential for successful colonization of the mammalian host by commensal and pathogenic bacteria. This Shigella flexneri protein is Glutamate decarboxylase alpha (gadA).